Consider the following 278-residue polypeptide: 3-methyl-2-oxobutanoate hydroxymethyltransferase (278 aa).

Residues Asp-43 and Asp-82 each contribute to the Mg(2+) site. 3-methyl-2-oxobutanoate is bound by residues 43 to 44, Asp-82, and Lys-112; that span reads DS. Mg(2+) is bound at residue Glu-114. The Proton acceptor role is filled by Glu-181.

The protein belongs to the PanB family. Homodecamer; pentamer of dimers. It depends on Mg(2+) as a cofactor.

It is found in the cytoplasm. The catalysed reaction is 3-methyl-2-oxobutanoate + (6R)-5,10-methylene-5,6,7,8-tetrahydrofolate + H2O = 2-dehydropantoate + (6S)-5,6,7,8-tetrahydrofolate. It functions in the pathway cofactor biosynthesis; (R)-pantothenate biosynthesis; (R)-pantoate from 3-methyl-2-oxobutanoate: step 1/2. Its function is as follows. Catalyzes the reversible reaction in which hydroxymethyl group from 5,10-methylenetetrahydrofolate is transferred onto alpha-ketoisovalerate to form ketopantoate. In Desulfitobacterium hafniense (strain Y51), this protein is 3-methyl-2-oxobutanoate hydroxymethyltransferase.